The sequence spans 865 residues: Protein translocase subunit SecA (865 aa).

Residues Gln-93, 111 to 115 (GEGKT), and Asp-501 contribute to the ATP site. 4 residues coordinate Zn(2+): Cys-841, Cys-843, Cys-852, and Cys-853.

This sequence belongs to the SecA family. As to quaternary structure, monomer and homodimer. Part of the essential Sec protein translocation apparatus which comprises SecA, SecYEG and auxiliary proteins SecDF-YajC and YidC. It depends on Zn(2+) as a cofactor.

The protein resides in the cell inner membrane. It localises to the cytoplasm. The catalysed reaction is ATP + H2O + cellular proteinSide 1 = ADP + phosphate + cellular proteinSide 2.. In terms of biological role, part of the Sec protein translocase complex. Interacts with the SecYEG preprotein conducting channel. Has a central role in coupling the hydrolysis of ATP to the transfer of proteins into and across the cell membrane, serving as an ATP-driven molecular motor driving the stepwise translocation of polypeptide chains across the membrane. This chain is Protein translocase subunit SecA, found in Helicobacter pylori (strain ATCC 700392 / 26695) (Campylobacter pylori).